The chain runs to 310 residues: Carbamate kinase 1 (310 aa).

In terms of assembly, homodimer (predominantly) and homotetramer.

It is found in the cytoplasm. The enzyme catalyses hydrogencarbonate + NH4(+) + ATP = carbamoyl phosphate + ADP + H2O + H(+). It participates in metabolic intermediate metabolism; carbamoyl phosphate degradation; CO(2) and NH(3) from carbamoyl phosphate: step 1/1. With respect to regulation, inhibited by adenosine(5')pentaphospho(5')adenosine (Ap5A), Ap6A and to a much lower extent by Ap4A. In terms of biological role, catalyzes the reversible synthesis of carbamate and ATP from carbamoyl phosphate and ADP. Can also catalyze, although with low efficiency, the phosphorylation of bicarbonate, leading to the formation of carboxyphosphate, an unstable intermediate found in the reactions catalyzed by carbamoyl-phosphate synthase and biotin carboxylase. Can also use acetate. In Enterococcus faecium (Streptococcus faecium), this protein is Carbamate kinase 1 (arcC1).